A 510-amino-acid polypeptide reads, in one-letter code: Maturase K (510 aa).

The protein belongs to the intron maturase 2 family. MatK subfamily.

The protein localises to the plastid. Usually encoded in the trnK tRNA gene intron. Probably assists in splicing its own and other chloroplast group II introns. This chain is Maturase K, found in Bartsia alpina (Velvet bells).